Here is a 288-residue protein sequence, read N- to C-terminus: Oxaloacetate decarboxylase (288 aa).

Substrate is bound at residue serine 47. Residue aspartate 85 participates in Mg(2+) binding. Arginine 156 and histidine 232 together coordinate substrate.

This sequence belongs to the isocitrate lyase/PEP mutase superfamily. Oxaloacetate decarboxylase family. As to quaternary structure, homotetramer; dimer of dimers. Requires Mg(2+) as cofactor.

The catalysed reaction is oxaloacetate + H(+) = pyruvate + CO2. Catalyzes the decarboxylation of oxaloacetate into pyruvate. Seems to play a role in maintaining cellular concentrations of bicarbonate and pyruvate. The sequence is that of Oxaloacetate decarboxylase from Rhodopseudomonas palustris (strain ATCC BAA-98 / CGA009).